The chain runs to 459 residues: uncharacterized protein (459 aa).

It belongs to the Rab GDI family.

It is found in the cytoplasm. It localises to the nucleus. This is an uncharacterized protein from Schizosaccharomyces pombe (strain 972 / ATCC 24843) (Fission yeast).